Reading from the N-terminus, the 168-residue chain is MNLQQQLSHCQQHQHLLQLTHFNHETAWQLGEKIKQQAELQGVALAINIRVNGQTLFSYAMPGTCAENADWLRRKRNVVELLGTSSYAAGLMLQQRQTSLEERYGVSLRDYAALGGGFPLQVKQAGIIGSVNVSGAPHLDDHNLLLQVLADFIGLPAGSIELLAPLTE.

It belongs to the UPF0303 family.

This is UPF0303 protein YE1367 from Yersinia enterocolitica serotype O:8 / biotype 1B (strain NCTC 13174 / 8081).